The sequence spans 533 residues: Peptide chain release factor 3 (533 aa).

The tr-type G domain maps to 9 to 284; it reads ARRRTFAIIS…ALCQLSPPPL (276 aa). GTP contacts are provided by residues 18 to 25, 95 to 99, and 149 to 152; these read SHPDAGKT, DTPGH, and NKLD.

The protein belongs to the TRAFAC class translation factor GTPase superfamily. Classic translation factor GTPase family. PrfC subfamily.

It is found in the cytoplasm. Functionally, increases the formation of ribosomal termination complexes and stimulates activities of RF-1 and RF-2. It binds guanine nucleotides and has strong preference for UGA stop codons. It may interact directly with the ribosome. The stimulation of RF-1 and RF-2 is significantly reduced by GTP and GDP, but not by GMP. This is Peptide chain release factor 3 from Cupriavidus pinatubonensis (strain JMP 134 / LMG 1197) (Cupriavidus necator (strain JMP 134)).